Consider the following 186-residue polypeptide: Putative inactive recombination-promoting nuclease-like protein YjiQ (186 aa).

Belongs to the Rpn/YhgA-like nuclease family.

Functionally, this pseudogene is the C-terminal fragment of low activity DNA endonuclease RpnD which probably yields 3'-hydroxyl ends. The intact protein can be seen in this entry (AC B7NGZ6). Expression of the repaired protein increases the frequency of recA-independent recombination, but also decreases viability probably via DNA damage; in a RecA strain expression has no effect on viability but does induce the SOS repair response. May play a role in horizontal gene transfer. This Escherichia coli (strain K12) protein is Putative inactive recombination-promoting nuclease-like protein YjiQ (yjiQ).